The chain runs to 727 residues: Polyribonucleotide nucleotidyltransferase (727 aa).

Residues Asp488 and Asp494 each coordinate Mg(2+). In terms of domain architecture, KH spans 555 to 614 (PKLYTMKINPEKIRDVIGKGGATIRALTDETGCQINIEEDGTITIAATEAAKADEAKRRI). In terms of domain architecture, S1 motif spans 624-692 (GKVYEGPVTK…DKGRVKLSMK (69 aa)). A disordered region spans residues 691–727 (MKALADRPAGDSGRPAPAERGERRERRDGGASEQQQQ). A compositionally biased stretch (basic and acidic residues) spans 707–720 (PAERGERRERRDGG).

It belongs to the polyribonucleotide nucleotidyltransferase family. Mg(2+) serves as cofactor.

It localises to the cytoplasm. The catalysed reaction is RNA(n+1) + phosphate = RNA(n) + a ribonucleoside 5'-diphosphate. Its function is as follows. Involved in mRNA degradation. Catalyzes the phosphorolysis of single-stranded polyribonucleotides processively in the 3'- to 5'-direction. This chain is Polyribonucleotide nucleotidyltransferase, found in Acidovorax ebreus (strain TPSY) (Diaphorobacter sp. (strain TPSY)).